The sequence spans 493 residues: Leucine-rich repeat-containing protein 14 (493 aa).

An LRR 1; degenerate repeat occupies K111–T146. The stretch at R194–D218 is one LRR 2; degenerate repeat. An LRR 3; degenerate repeat occupies A219–R246. An LRR 4; degenerate repeat occupies F247–R282. LRR repeat units follow at residues F283–L307, Q308–K339, K340–L360, A364–R391, and C392–D416.

This sequence belongs to the PRAME family. LRRC14 subfamily. In terms of assembly, interacts with IKBKB; disrupts IKBKB-IKBKG interaction preventing I-kappa-B-kinase (IKK) core complex formation and leading to a decrease of IKBKB phosphorylation and NF-kappaB activation. Interacts with CHUK.

The protein localises to the cytoplasm. Its function is as follows. Negatively regulates Toll-like receptor-mediated NF-kappa-B signaling by disrupting IKK core complex formation through interaction with IKBKB. This Bos taurus (Bovine) protein is Leucine-rich repeat-containing protein 14.